The sequence spans 124 residues: Fluoride-specific ion channel FluC (124 aa).

Helical transmembrane passes span 5–25, 35–55, 63–83, and 98–118; these read FLQV…VNIL, LGTL…AALL, LAPF…AFAL, and LGYV…GLTV. Residues Gly73 and Thr76 each coordinate Na(+).

Belongs to the fluoride channel Fluc/FEX (TC 1.A.43) family.

The protein localises to the cell inner membrane. The catalysed reaction is fluoride(in) = fluoride(out). Na(+) is not transported, but it plays an essential structural role and its presence is essential for fluoride channel function. Fluoride-specific ion channel. Important for reducing fluoride concentration in the cell, thus reducing its toxicity. This Paracoccus denitrificans (strain Pd 1222) protein is Fluoride-specific ion channel FluC.